The sequence spans 120 residues: Large ribosomal subunit protein bL12 (120 aa).

A compositionally biased stretch (basic and acidic residues) spans 95–112 (KEGVSKEEAEEVQGKLEE). The disordered stretch occupies residues 95–120 (KEGVSKEEAEEVQGKLEEAGASVEVK).

This sequence belongs to the bacterial ribosomal protein bL12 family. In terms of assembly, homodimer. Part of the ribosomal stalk of the 50S ribosomal subunit. Forms a multimeric L10(L12)X complex, where L10 forms an elongated spine to which 2 to 4 L12 dimers bind in a sequential fashion. Binds GTP-bound translation factors.

Forms part of the ribosomal stalk which helps the ribosome interact with GTP-bound translation factors. Is thus essential for accurate translation. The chain is Large ribosomal subunit protein bL12 from Oceanobacillus iheyensis (strain DSM 14371 / CIP 107618 / JCM 11309 / KCTC 3954 / HTE831).